A 334-amino-acid polypeptide reads, in one-letter code: N,N'-diacetyllegionaminic acid synthase (334 aa).

The AFP-like domain maps to 282 to 334 (SLVAKKDIKKGEIFSEGNLTTKRPANGISAMRYEEFLGKIATKNYKEDELIRE).

It catalyses the reaction 2,4-diacetamido-2,4,6-trideoxy-alpha-D-mannopyranose + phosphoenolpyruvate + H2O = N,N-diacetyllegionaminate + phosphate. In terms of biological role, involved in biosynthesis of legionaminic acid (5,7-diamino-3,5,7,9-tetradeoxy-D-glycero-D-galacto-non-2-ulosonic acid)(Leg), a sialic acid-like derivative that is incorporated into flagellin via O-linkage to Ser/Thr. Catalyzes the condensation of 2,4-diacetamido-2,4,6-trideoxymannose with phosphoenolpyruvate (PEP) to give N,N'-diacetyllegionaminic acid. The chain is N,N'-diacetyllegionaminic acid synthase (legI) from Campylobacter jejuni subsp. jejuni serotype O:2 (strain ATCC 700819 / NCTC 11168).